The following is a 151-amino-acid chain: Sec-independent protein translocase protein TatB (151 aa).

The helical transmembrane segment at 1-21 threads the bilayer; sequence MFDIGFLELLICGVIALLVLG. Composition is skewed to basic and acidic residues over residues 87–99 and 122–132; these read KYEHMILPDDQTR and EPPHEPVRDEA. The segment at 87-151 is disordered; sequence KYEHMILPDD…SPTSPSDKYS (65 aa). Over residues 134-151 the composition is skewed to low complexity; that stretch reads ASDQPSDSSPTSPSDKYS.

It belongs to the TatB family. The Tat system comprises two distinct complexes: a TatABC complex, containing multiple copies of TatA, TatB and TatC subunits, and a separate TatA complex, containing only TatA subunits. Substrates initially bind to the TatABC complex, which probably triggers association of the separate TatA complex to form the active translocon.

It localises to the cell inner membrane. Functionally, part of the twin-arginine translocation (Tat) system that transports large folded proteins containing a characteristic twin-arginine motif in their signal peptide across membranes. Together with TatC, TatB is part of a receptor directly interacting with Tat signal peptides. TatB may form an oligomeric binding site that transiently accommodates folded Tat precursor proteins before their translocation. This Marinobacter nauticus (strain ATCC 700491 / DSM 11845 / VT8) (Marinobacter aquaeolei) protein is Sec-independent protein translocase protein TatB.